The primary structure comprises 95 residues: Enhancer of yellow 2 transcription factor (95 aa).

Belongs to the ENY2 family. In terms of assembly, component of the nuclear pore complex (NPC)-associated AMEX complex (anchoring and mRNA export complex), composed of at least e(y)2 and xmas-2. Component of the SAGA transcription coactivator-HAT complexes, at least composed of Ada2b, e(y)2, Pcaf/Gcn5, Taf10 and Nipped-A/Trrap. Within the SAGA complex, e(y)2, Sgf11, and not/nonstop form an additional subcomplex of SAGA called the DUB module (deubiquitination module). Component of the THO complex, composed of at least e(y)2, HPR1, THO2, THOC5, THOC6 and THOC7. Interacts with e(y)1. Interacts with su(Hw) (via zinc fingers). Interacts with xmas-2; required for localization to the nuclear periphery. Interacts with the nuclear pore complex (NPC).

It is found in the nucleus. It localises to the nucleoplasm. Its subcellular location is the cytoplasm. Involved in mRNA export coupled transcription activation by association with both the AMEX and the SAGA complexes. The SAGA complex is a multiprotein complex that activates transcription by remodeling chromatin and mediating histone acetylation and deubiquitination. Within the SAGA complex, participates in a subcomplex that specifically deubiquitinates histone H2B. The SAGA complex is recruited to specific gene promoters by activators, where it is required for transcription. Required for nuclear receptor-mediated transactivation. Involved in transcription elongation by recruiting the THO complex onto nascent mRNA. The AMEX complex functions in docking export-competent ribonucleoprotein particles (mRNPs) to the nuclear entrance of the nuclear pore complex (nuclear basket). AMEX participates in mRNA export and accurate chromatin positioning in the nucleus by tethering genes to the nuclear periphery. The polypeptide is Enhancer of yellow 2 transcription factor (Drosophila virilis (Fruit fly)).